A 409-amino-acid polypeptide reads, in one-letter code: UPF0261 protein Spro_4740 (409 aa).

The protein belongs to the UPF0261 family.

The sequence is that of UPF0261 protein Spro_4740 from Serratia proteamaculans (strain 568).